The sequence spans 407 residues: Phosphopentomutase (407 aa).

Aspartate 10, aspartate 306, histidine 311, aspartate 347, histidine 348, and histidine 359 together coordinate Mn(2+).

Belongs to the phosphopentomutase family. Mn(2+) serves as cofactor.

Its subcellular location is the cytoplasm. It carries out the reaction 2-deoxy-alpha-D-ribose 1-phosphate = 2-deoxy-D-ribose 5-phosphate. The catalysed reaction is alpha-D-ribose 1-phosphate = D-ribose 5-phosphate. It functions in the pathway carbohydrate degradation; 2-deoxy-D-ribose 1-phosphate degradation; D-glyceraldehyde 3-phosphate and acetaldehyde from 2-deoxy-alpha-D-ribose 1-phosphate: step 1/2. Isomerase that catalyzes the conversion of deoxy-ribose 1-phosphate (dRib-1-P) and ribose 1-phosphate (Rib-1-P) to deoxy-ribose 5-phosphate (dRib-5-P) and ribose 5-phosphate (Rib-5-P), respectively. This is Phosphopentomutase from Escherichia coli (strain UTI89 / UPEC).